The primary structure comprises 115 residues: Large ribosomal subunit protein uL18 (115 aa).

The protein belongs to the universal ribosomal protein uL18 family. In terms of assembly, part of the 50S ribosomal subunit; part of the 5S rRNA/L5/L18/L25 subcomplex. Contacts the 5S and 23S rRNAs.

In terms of biological role, this is one of the proteins that bind and probably mediate the attachment of the 5S RNA into the large ribosomal subunit, where it forms part of the central protuberance. The polypeptide is Large ribosomal subunit protein uL18 (Vesicomyosocius okutanii subsp. Calyptogena okutanii (strain HA)).